The primary structure comprises 225 residues: Imidazole glycerol phosphate synthase subunit HisH (225 aa).

Residues 3–225 enclose the Glutamine amidotransferase type-1 domain; that stretch reads TIAIVDYGMG…LYRNFVDWQP (223 aa). Residue Cys82 is the Nucleophile of the active site. Residues His205 and Glu207 contribute to the active site.

As to quaternary structure, heterodimer of HisH and HisF.

It is found in the cytoplasm. The catalysed reaction is 5-[(5-phospho-1-deoxy-D-ribulos-1-ylimino)methylamino]-1-(5-phospho-beta-D-ribosyl)imidazole-4-carboxamide + L-glutamine = D-erythro-1-(imidazol-4-yl)glycerol 3-phosphate + 5-amino-1-(5-phospho-beta-D-ribosyl)imidazole-4-carboxamide + L-glutamate + H(+). It carries out the reaction L-glutamine + H2O = L-glutamate + NH4(+). The protein operates within amino-acid biosynthesis; L-histidine biosynthesis; L-histidine from 5-phospho-alpha-D-ribose 1-diphosphate: step 5/9. IGPS catalyzes the conversion of PRFAR and glutamine to IGP, AICAR and glutamate. The HisH subunit catalyzes the hydrolysis of glutamine to glutamate and ammonia as part of the synthesis of IGP and AICAR. The resulting ammonia molecule is channeled to the active site of HisF. The sequence is that of Imidazole glycerol phosphate synthase subunit HisH from Bordetella bronchiseptica (strain ATCC BAA-588 / NCTC 13252 / RB50) (Alcaligenes bronchisepticus).